A 743-amino-acid polypeptide reads, in one-letter code: Putative pre-mRNA-splicing factor ATP-dependent RNA helicase DHX32 (743 aa).

At M1 the chain carries N-acetylmethionine. A disordered region spans residues 1 to 28 (MEEEGLECPNSSSEKRYFPESLDSSDGD). The Helicase ATP-binding domain maps to 72-238 (MENLLQNQIV…YGNVPVIEVK (167 aa)). Position 85–92 (85–92 (GDAKCGKS)) interacts with ATP. Positions 185 to 188 (DDIH) match the DEAH box motif.

The protein belongs to the DEAD box helicase family. DEAH subfamily. As to expression, expressed in lymphoid tissues (at protein level). Expressed in brain, heart, skeletal muscle, colon, thymus, spleen, kidney, liver, small intestine, placenta, lung, lymphoid tissues and blood leukocytes.

Its subcellular location is the nucleus. It localises to the mitochondrion. The enzyme catalyses ATP + H2O = ADP + phosphate + H(+). This is Putative pre-mRNA-splicing factor ATP-dependent RNA helicase DHX32 (DHX32) from Homo sapiens (Human).